The following is a 94-amino-acid chain: Large ribosomal subunit protein uL23 (94 aa).

This sequence belongs to the universal ribosomal protein uL23 family. In terms of assembly, part of the 50S ribosomal subunit. Contacts protein L29, and trigger factor when it is bound to the ribosome.

Its function is as follows. One of the early assembly proteins it binds 23S rRNA. One of the proteins that surrounds the polypeptide exit tunnel on the outside of the ribosome. Forms the main docking site for trigger factor binding to the ribosome. In Roseiflexus castenholzii (strain DSM 13941 / HLO8), this protein is Large ribosomal subunit protein uL23.